The sequence spans 59 residues: Small ribosomal subunit protein bS21 (59 aa).

A disordered region spans residues 27 to 59 (GLMAEMRKREHYEKPSVRRKKKAQARNKKKRYA). The span at 31–42 (EMRKREHYEKPS) shows a compositional bias: basic and acidic residues. A compositionally biased stretch (basic residues) spans 43–59 (VRRKKKAQARNKKKRYA).

Belongs to the bacterial ribosomal protein bS21 family.

This is Small ribosomal subunit protein bS21 from Carboxydothermus hydrogenoformans (strain ATCC BAA-161 / DSM 6008 / Z-2901).